The sequence spans 437 residues: Adenylosuccinate synthetase 1 (437 aa).

GTP-binding positions include 13–19 (GDEGKGK) and 41–43 (GHT). The active-site Proton acceptor is aspartate 14. Mg(2+) contacts are provided by aspartate 14 and glycine 41. IMP contacts are provided by residues 14–17 (DEGK), 39–42 (NAGH), threonine 130, arginine 144, glutamine 225, threonine 240, and arginine 310. Residue histidine 42 is the Proton donor of the active site. Residue 306-312 (ATTGRLR) participates in substrate binding. GTP is bound by residues arginine 312, 338–340 (KLD), and 421–423 (STG).

This sequence belongs to the adenylosuccinate synthetase family. As to quaternary structure, homodimer. The cofactor is Mg(2+).

The protein localises to the cytoplasm. The catalysed reaction is IMP + L-aspartate + GTP = N(6)-(1,2-dicarboxyethyl)-AMP + GDP + phosphate + 2 H(+). Its pathway is purine metabolism; AMP biosynthesis via de novo pathway; AMP from IMP: step 1/2. In terms of biological role, plays an important role in the de novo pathway of purine nucleotide biosynthesis. Catalyzes the first committed step in the biosynthesis of AMP from IMP. This Pseudoalteromonas translucida (strain TAC 125) protein is Adenylosuccinate synthetase 1.